Here is a 163-residue protein sequence, read N- to C-terminus: ATP synthase subunit b 1 (163 aa).

The chain crosses the membrane as a helical span at residues 7-27 (PETWVAIAFVILMGLFAYLGV).

This sequence belongs to the ATPase B chain family. In terms of assembly, F-type ATPases have 2 components, F(1) - the catalytic core - and F(0) - the membrane proton channel. F(1) has five subunits: alpha(3), beta(3), gamma(1), delta(1), epsilon(1). F(0) has three main subunits: a(1), b(2) and c(10-14). The alpha and beta chains form an alternating ring which encloses part of the gamma chain. F(1) is attached to F(0) by a central stalk formed by the gamma and epsilon chains, while a peripheral stalk is formed by the delta and b chains.

The protein resides in the cell inner membrane. In terms of biological role, f(1)F(0) ATP synthase produces ATP from ADP in the presence of a proton or sodium gradient. F-type ATPases consist of two structural domains, F(1) containing the extramembraneous catalytic core and F(0) containing the membrane proton channel, linked together by a central stalk and a peripheral stalk. During catalysis, ATP synthesis in the catalytic domain of F(1) is coupled via a rotary mechanism of the central stalk subunits to proton translocation. Functionally, component of the F(0) channel, it forms part of the peripheral stalk, linking F(1) to F(0). This Bradyrhizobium sp. (strain BTAi1 / ATCC BAA-1182) protein is ATP synthase subunit b 1.